The sequence spans 192 residues: UPF0149 protein VIBHAR_03551 (192 aa).

The protein belongs to the UPF0149 family.

The protein is UPF0149 protein VIBHAR_03551 of Vibrio campbellii (strain ATCC BAA-1116).